The sequence spans 178 residues: Bifunctional protein PyrR (178 aa).

A PRPP-binding motif is present at residues 99-111 (VILVDDVLFTGRT).

Belongs to the purine/pyrimidine phosphoribosyltransferase family. PyrR subfamily. In terms of assembly, homodimer and homohexamer; in equilibrium.

It carries out the reaction UMP + diphosphate = 5-phospho-alpha-D-ribose 1-diphosphate + uracil. In terms of biological role, regulates transcriptional attenuation of the pyrimidine nucleotide (pyr) operon by binding in a uridine-dependent manner to specific sites on pyr mRNA. This disrupts an antiterminator hairpin in the RNA and favors formation of a downstream transcription terminator, leading to a reduced expression of downstream genes. Functionally, also displays a weak uracil phosphoribosyltransferase activity which is not physiologically significant. In Limosilactobacillus reuteri subsp. reuteri (strain JCM 1112) (Lactobacillus reuteri), this protein is Bifunctional protein PyrR.